Consider the following 122-residue polypeptide: Small ribosomal subunit protein uS13 (122 aa).

The disordered stretch occupies residues 97-122 (PVRGQKTKSNARTRKGPRPSRIKKKK). The span at 101-122 (QKTKSNARTRKGPRPSRIKKKK) shows a compositional bias: basic residues.

Belongs to the universal ribosomal protein uS13 family. Part of the 30S ribosomal subunit. Forms a loose heterodimer with protein S19. Forms two bridges to the 50S subunit in the 70S ribosome.

Functionally, located at the top of the head of the 30S subunit, it contacts several helices of the 16S rRNA. In the 70S ribosome it contacts the 23S rRNA (bridge B1a) and protein L5 of the 50S subunit (bridge B1b), connecting the 2 subunits; these bridges are implicated in subunit movement. Contacts the tRNAs in the A and P-sites. This chain is Small ribosomal subunit protein uS13, found in Thermosipho melanesiensis (strain DSM 12029 / CIP 104789 / BI429).